Here is a 367-residue protein sequence, read N- to C-terminus: Probable dual-specificity RNA methyltransferase RlmN (367 aa).

E92 serves as the catalytic Proton acceptor. In terms of domain architecture, Radical SAM core spans 98–326 (QEYGLSVCVT…YDTLKKNGIN (229 aa)). The cysteines at positions 105 and 341 are disulfide-linked. [4Fe-4S] cluster-binding residues include C112, C116, and C119. Residues 164 to 165 (GE), S196, 219 to 221 (SLH), and N297 each bind S-adenosyl-L-methionine. C341 functions as the S-methylcysteine intermediate in the catalytic mechanism.

The protein belongs to the radical SAM superfamily. RlmN family. Requires [4Fe-4S] cluster as cofactor.

Its subcellular location is the cytoplasm. It carries out the reaction adenosine(2503) in 23S rRNA + 2 reduced [2Fe-2S]-[ferredoxin] + 2 S-adenosyl-L-methionine = 2-methyladenosine(2503) in 23S rRNA + 5'-deoxyadenosine + L-methionine + 2 oxidized [2Fe-2S]-[ferredoxin] + S-adenosyl-L-homocysteine. The catalysed reaction is adenosine(37) in tRNA + 2 reduced [2Fe-2S]-[ferredoxin] + 2 S-adenosyl-L-methionine = 2-methyladenosine(37) in tRNA + 5'-deoxyadenosine + L-methionine + 2 oxidized [2Fe-2S]-[ferredoxin] + S-adenosyl-L-homocysteine. In terms of biological role, specifically methylates position 2 of adenine 2503 in 23S rRNA and position 2 of adenine 37 in tRNAs. This chain is Probable dual-specificity RNA methyltransferase RlmN, found in Listeria monocytogenes serovar 1/2a (strain ATCC BAA-679 / EGD-e).